Consider the following 79-residue polypeptide: Protein S100-G (79 aa).

S2 carries the post-translational modification N-acetylserine. EF-hand domains lie at 13 to 48 and 45 to 79; these read IFEKYAAKEGDPNQLSKEELKLLLQTEFPSLLKGPS and KGPSTLDELFEELDKNGDGEVSFEEFQVLVKKISQ. Ca(2+) is bound by residues Q26 and E31. S42 is subject to Phosphoserine. Ca(2+)-binding residues include D58, N60, D62, E64, and E69.

Belongs to the S-100 family.

The chain is Protein S100-G (S100G) from Bos taurus (Bovine).